The following is a 211-amino-acid chain: Glutathione S-transferase class-mu 28 kDa isozyme (211 aa).

Ala2 is subject to N-acetylalanine. In terms of domain architecture, GST N-terminal spans 4–86; it reads EHIKVIYFDG…YMAKKHHMMG (83 aa). Residues Tyr10, 10–11, Arg16, 41–45, Leu53, 55–56, and 70–71 contribute to the glutathione site; these read YF, WPKIK, AV, and ES. In terms of domain architecture, GST C-terminal spans 88 to 211; it reads TDEEYYSVEK…YLSNRPATPF (124 aa).

It belongs to the GST superfamily. Mu family. As to quaternary structure, homodimer. In terms of tissue distribution, in the adult, expressed in excretory epithelial cells but absent from the caecal epithelium and flame cells. Also expressed in the tegument and its extensions into the parenchyma. In the schistosomulum, expressed in the tegument and associated structures. Not expressed in digestive tract, reproductive organs or muscles (at protein level).

It carries out the reaction RX + glutathione = an S-substituted glutathione + a halide anion + H(+). Its function is as follows. Conjugation of reduced glutathione to a wide number of exogenous and endogenous hydrophobic electrophiles. Functionally, GST isoenzymes appear to play a central role in the parasite detoxification system. Other functions are also suspected including a role in increasing the solubility of haematin in the parasite gut. This chain is Glutathione S-transferase class-mu 28 kDa isozyme (GST28), found in Schistosoma mansoni (Blood fluke).